The following is a 385-amino-acid chain: Queuine tRNA-ribosyltransferase (385 aa).

D93 functions as the Proton acceptor in the catalytic mechanism. Residues D93–F97, D147, Q191, and G218 each bind substrate. The segment at G249–D255 is RNA binding. The active-site Nucleophile is the D268. Residues T273–R277 are RNA binding; important for wobble base 34 recognition. Zn(2+) is bound by residues C306, C308, C311, and H337.

Belongs to the queuine tRNA-ribosyltransferase family. In terms of assembly, homodimer. Within each dimer, one monomer is responsible for RNA recognition and catalysis, while the other monomer binds to the replacement base PreQ1. Zn(2+) serves as cofactor.

It carries out the reaction 7-aminomethyl-7-carbaguanine + guanosine(34) in tRNA = 7-aminomethyl-7-carbaguanosine(34) in tRNA + guanine. The protein operates within tRNA modification; tRNA-queuosine biosynthesis. Functionally, catalyzes the base-exchange of a guanine (G) residue with the queuine precursor 7-aminomethyl-7-deazaguanine (PreQ1) at position 34 (anticodon wobble position) in tRNAs with GU(N) anticodons (tRNA-Asp, -Asn, -His and -Tyr). Catalysis occurs through a double-displacement mechanism. The nucleophile active site attacks the C1' of nucleotide 34 to detach the guanine base from the RNA, forming a covalent enzyme-RNA intermediate. The proton acceptor active site deprotonates the incoming PreQ1, allowing a nucleophilic attack on the C1' of the ribose to form the product. After dissociation, two additional enzymatic reactions on the tRNA convert PreQ1 to queuine (Q), resulting in the hypermodified nucleoside queuosine (7-(((4,5-cis-dihydroxy-2-cyclopenten-1-yl)amino)methyl)-7-deazaguanosine). This is Queuine tRNA-ribosyltransferase from Pasteurella multocida (strain Pm70).